The following is a 669-amino-acid chain: 5-taurinomethyluridine-[tRNA] synthase subunit MTO1, mitochondrial (669 aa).

A mitochondrion-targeting transit peptide spans 1–25 (MFLLRGRGHWAAASLGRRLPLRRLR). FAD contacts are provided by residues 42–47 (GGGHAG), V154, S217, and Q406. An N6-methyllysine modification is found at K507.

Belongs to the MnmG family. Homodimer; forms a dimer in the presence of potassium. Interacts with GTPBP3; forms the GTPBP3-MTO1 complex composed of homodimers of GTPBP3 and MTO1. Requires FAD as cofactor. Ubiquitously expressed in various tissues, but with markedly elevated expression in tissues of high metabolic rates.

It localises to the mitochondrion. It carries out the reaction 5,10-methylenetetrahydrofolate + uridine(34) in tRNA + taurine + GTP + A + H2O = 5-taurinomethyluridine(34) in tRNA + 7,8-dihydrofolate + GDP + AH2 + phosphate + H(+). Functionally, component of the GTPBP3-MTO1 complex that catalyzes the 5-taurinomethyluridine (taum(5)U) modification at the 34th wobble position (U34) of mitochondrial tRNAs (mt-tRNAs), which plays a role in mt-tRNA decoding and mitochondrial translation. Taum(5)U formation on mammalian mt-tRNA requires the presence of both GTPBP3-mediated GTPase activity and MTO1 catalytic activity. The polypeptide is 5-taurinomethyluridine-[tRNA] synthase subunit MTO1, mitochondrial (Mus musculus (Mouse)).